A 671-amino-acid chain; its full sequence is MQPTGNQIQQNQQQQQQLIMRVPKQEVSVSGAARRYVQQAPPNRPPRQNHQNGAIGGKKSSVTIQEVPNNAYLETLNKSGNNKVDDDKLPVFLIKLWNIVEDPNLQSIVHWDDSGASFHISDPYLFGRNVLPHFFKHNNMNSMVRQLNMYGFRKMTPLSQGGLTRTESDQDHLEFSHPCFVQGRPELLSQIKRKQSARTVEDKQVNEQTQQNLEVVMAEMRAMREKAKNMEDKMNKLTKENRDMWTQMGSMRQQHARQQQYFKKLLHFLVSVMQPGLSKRVAKRGVLEIDFCAANGTAGPNSKRARMNSEEGPYKDVCDLLESLQRETQEPFSRRFTNNEGPLISEVTDEFGNSPVGRGSAQDLFGDTFGAQSSRYSDGGATSSREQSPHPIISQPQSNSAGAHGANEQKPDDMYMGSGPLTHENIHRGISALKRDYQGASPASGGPSTSSSAPSGAGAGARMAQKRAAPYKNATRQMAQPQQDYSGGFVNNYSGFMPSDPSMIPYQPSHQYLQPHQKLMAIEDQHHPTTSTSSTNADPHQNLYSPTLGLSPSFDRQLSQELQEYFTGTDTSLESFRDLVSNHNWDDFGNNVPLDDDEEGSEDPLRQLALENAPETSNYDGAEDLLFDNEQQYPENGFDVPDPNYLPLADEEIFPHSPALRTPSPSDPNLV.

Composition is skewed to low complexity over residues Met-1 to Gln-17 and Gln-38 to Asn-52. The disordered stretch occupies residues Met-1–Ser-61. The tract at residues Leu-89–Ser-196 is DNA-binding domain. The stretch at Asn-206–Glu-240 forms a coiled coil. Disordered regions lie at residues Gln-329–His-423, Tyr-437–Tyr-493, His-526–Pro-552, and Asn-612–Val-671. The span at Gly-370–Glu-386 shows a compositional bias: polar residues. The span at Gly-439–Gly-456 shows a compositional bias: low complexity. Composition is skewed to polar residues over residues Ala-474 to Tyr-493 and Pro-528 to Pro-552.

The protein belongs to the HSF family. As to quaternary structure, forms homodimers and homotrimers. Component of the DHIC (ddl-1-containing hsf-1 inhibitory complex), which contains at least ddl-1, ddl-2, hsb-1 and hsf-1. Within the complex, interacts with ddl-1. Formation of the DHIC may be dependent upon the Insulin/IGF-1-like signaling (IIS) mediated pathway. Phosphorylated. In terms of processing, sumoylated. Sumoylation may inhibit transcriptional activity in response to heat shock. Expressed in intestinal cells, body wall muscle cells, and hypodermal cells, as well as many neurons in the head and tail.

It localises to the nucleus. The protein resides in the cytoplasm. Its function is as follows. Functions as a stress-inducible and DNA-binding transcription factor, playing a central role in the transcriptional activation of the heat shock response (HSR), leading to the expression of a large class of molecular chaperones, heat shock proteins (HSPs), that protect cells from cellular insult damage. Upon exposure to heat and other stress stimuli, activates gene transcription through binding to site-specific heat shock elements (HSEs) present in the promoter regions of target genes, such as the HSPs. Binds to inverted 5'-NGAAN-3' pentamer DNA sequences in HSEs. Involved in positive modulation of expression of heat shock protein hsp-16.2 in response to heat shock; may act in concert with homeodomain-interacting protein kinase hpk-1. In response to heat shock or starvation, required for the modulation of lifespan, and protection against aberrant protein aggregation proteotoxicity; may act in parallel with the Insulin/IGF-1-like signaling (IIS) mediated pathway. Plays a role in modulating autophagy, in response to a moderate and short-term heat shock, also known as a hormetic heat shock. Involved in positive modulation of ascaroside pheromone biosynthesis in response to heat shock, perhaps by directly activating transcription of peroxisomal fatty acid beta-oxidation genes. Required in modulating the response to infection by either Gram-negative or Gram-positive bacteria, perhaps acting via regulation of expression of Hsp90/daf-21 and members of the small heat shock protein (HSP20) family. May play a role downstream of the daf-16/FOXO and daf-2 signaling pathway in response to bacterial pathogens. Modulates expression of multiple microRNA genes, in both heat shock-dependent and -independent manner. Independent of heat shock, required to modulate expression of genes involved in larval development, mainly distinct from HSPs; acts in concert with putative transcription factor efl-1/E2F, which may form part of a multiprotein DRM complex. Independent of heat shock, involved in promoting death of the linker cell, a male-specific cell which guides the elongation of the gonad; perhaps acting by modulating expression of ubiquitin-conjugating enzyme let-70. Plays a role in egg-laying. The chain is Heat shock transcription factor hsf-1 from Caenorhabditis elegans.